Here is a 349-residue protein sequence, read N- to C-terminus: Green-sensitive opsin-3 (349 aa).

Residues 1-36 (MNGTEGNNFYIPMSNRTGLVRSPYEYPQYYLAEPWQ) are Extracellular-facing. N-linked (GlcNAc...) asparagine glycans are attached at residues N2 and N15. The chain crosses the membrane as a helical span at residues 37–61 (FKLLAVYMFFLMCFGFPINGLTLVV). The Cytoplasmic portion of the chain corresponds to 62 to 73 (TAQHKKLRQPLN). The helical transmembrane segment at 74–99 (FILVNLAVAGTIMVCFGFTVTFYTAI) threads the bilayer. The Extracellular portion of the chain corresponds to 100–113 (NGYFVLGPTGCAIE). C110 and C187 are oxidised to a cystine. Residues 114–133 (GFMATLGGQISLWSLVVLAI) traverse the membrane as a helical segment. Over 134 to 152 (ERYIVVCKPMGSFKFSSNH) the chain is Cytoplasmic. Residues 153 to 176 (AFAGIGFTWIMALSCAAPPLVGWS) form a helical membrane-spanning segment. The Extracellular segment spans residues 177–202 (RYIPEGMQCSCGPDYYTLNPDYNNES). N200 carries an N-linked (GlcNAc...) asparagine glycan. A helical transmembrane segment spans residues 203-230 (YVLYMFCCHFIFPVTTIFFTYGRLVCTV). Topologically, residues 231-252 (KAAAAQQQESESTQKAEREVTR) are cytoplasmic. A helical transmembrane segment spans residues 253–276 (MVILMVLGFLVAWTPYASVAAWIF). At 277-284 (FNRGAAFS) the chain is on the extracellular side. A helical membrane pass occupies residues 285 to 309 (AQFMAVPAFFSKSSSIFNPIIYVLL). An N6-(retinylidene)lysine modification is found at K296. Over 310-349 (NKQFRNCMLTTLFCGKNPLGDDESSTVSTSKTEVSSVSPA) the chain is Cytoplasmic. Residues 329–349 (GDDESSTVSTSKTEVSSVSPA) are disordered. The span at 334–349 (STVSTSKTEVSSVSPA) shows a compositional bias: low complexity.

Belongs to the G-protein coupled receptor 1 family. Opsin subfamily. Phosphorylated on some or all of the serine and threonine residues present in the C-terminal region.

Its subcellular location is the membrane. Functionally, visual pigments are the light-absorbing molecules that mediate vision. They consist of an apoprotein, opsin, covalently linked to cis-retinal. The polypeptide is Green-sensitive opsin-3 (opn1mw3) (Danio rerio (Zebrafish)).